The sequence spans 462 residues: MAYGWNGCGMGVQVNGSNGAIGLSSKYSRNTELRRVEDNDIYRLAKILDENSCWRKLMSIIPKGMDVQACSGAGCLNFPAEIKKGFKYTAQDVFQIDEAANRLPPDQSKSQMMIDEWKTSGKLNERPTVGVLLQLLVQAELFSAADFVALDFLNESTPARPVDGPGALISLELLEEEMEVDNEGLSLKYQSSTATLGADAQGSVGLNLDNFEKDIVRRDKSVPQPSGNTPPIAPPRRQQRSTTNSNFATLTGTGTTSTTIPNVPNLTILNPSEQIQEPVLQPRPMNIPDLSILISNSGDLRATVSDNPSNRTSSTDPPNIPRITLLIDNSGDVNSRPNHAPAKASTATTSTASSNNLPMISALNISKGSRETLRPESRSSSSSLSKDDDDDNDGEEDGEEEYPDAFLPNLSNSEQQSSNNDSSLTTVTGTSGDNSFELTNDSSSTSNDDYACNIPDLSELQQ.

Residues 27–152 (YSRNTELRRV…SAADFVALDF (126 aa)) enclose the Death domain. The interval 218-265 (RDKSVPQPSGNTPPIAPPRRQQRSTTNSNFATLTGTGTTSTTIPNVPN) is disordered. Over residues 249–259 (TLTGTGTTSTT) the composition is skewed to low complexity. Tandem repeats lie at residues 262 to 269 (NVPNLTIL) and 286 to 293 (NIPDLSIL). The 5 X approximate repeats stretch occupies residues 262-460 (NVPNLTILNP…ACNIPDLSEL (199 aa)). The span at 301 to 317 (RATVSDNPSNRTSSTDP) shows a compositional bias: polar residues. The segment at 301–462 (RATVSDNPSN…NIPDLSELQQ (162 aa)) is disordered. Repeat 3 spans residues 319–326 (NIPRITLL). The segment covering 342–354 (AKASTATTSTASS) has biased composition (low complexity). Over residues 355–367 (NNLPMISALNISK) the composition is skewed to polar residues. Repeat 4 spans residues 356–363 (NLPMISAL). Over residues 368-377 (GSRETLRPES) the composition is skewed to basic and acidic residues. The segment covering 387–403 (DDDDDNDGEEDGEEEYP) has biased composition (acidic residues). Residues 409-424 (NLSNSEQQSSNNDSSL) show a composition bias toward low complexity. Polar residues predominate over residues 425 to 438 (TTVTGTSGDNSFEL). The segment covering 439–449 (TNDSSSTSNDD) has biased composition (low complexity). The stretch at 453–460 (NIPDLSEL) is repeat 5.

As to quaternary structure, interacts (via Death domain) with pll (via Death domain). Post-translationally, phosphorylated by pll.

It localises to the cytoplasm. Its subcellular location is the cell membrane. Its function is as follows. Plays an essential role in the Tl receptor signaling pathway that establishes embryonic dorsoventral polarity; the signal directs import of dl into ventral and ventrolateral nuclei, thereby establishing dorsoventral polarity. Tub recruits pll to the plasma membrane and protein-protein interaction activates pll. Also has a role in pupal pattern formation. The chain is Protein Tube (tub) from Drosophila melanogaster (Fruit fly).